A 165-amino-acid polypeptide reads, in one-letter code: MAEKQAGLVGEPDPEGSSPGTSESWNYDSNCVFCRVAAGQEPKTELFHCENEDLVCFKDIKPAALYHYLVVPKKHIGSCKDLNKDHIEMVESMVAAGKTMLERNNFTDFTDVRMGFHVPPFCSISHLHLHVIAPVKEFGFLSKLVYRQDSYWFVTVDYLLEKLRK.

The interval 1–23 (MAEKQAGLVGEPDPEGSSPGTSE) is disordered. Alanine 2 bears the N-acetylalanine mark. The region spanning 32-143 (VFCRVAAGQE…PVKEFGFLSK (112 aa)) is the HIT domain. AMP is bound by residues 59–60 (DI) and 128–130 (HLH). The Histidine triad motif signature appears at 126–130 (HLHLH). Histidine 128 (tele-AMP-histidine intermediate) is an active-site residue.

Belongs to the HINT family. As to quaternary structure, forms dimers to octamers and even larger oligomer. Interacts with CALM1.

It is found in the cytoplasm. It localises to the nucleus. It carries out the reaction adenosine 5'-phosphoramidate + H2O = AMP + NH4(+). In terms of biological role, exhibits adenosine 5'-monophosphoramidase activity, hydrolyzing purine nucleotide phosphoramidates with a single phosphate group such as adenosine 5'monophosphoramidate (AMP-NH2) to yield AMP and NH2. Hydrolyzes lysyl-AMP (AMP-N-epsilon-(N-alpha-acetyl lysine methyl ester)) generated by lysine tRNA ligase. The protein is Adenosine 5'-monophosphoramidase HINT3 (Hint3) of Mus musculus (Mouse).